A 132-amino-acid chain; its full sequence is Small ribosomal subunit protein uS8 (132 aa).

This sequence belongs to the universal ribosomal protein uS8 family. In terms of assembly, part of the 30S ribosomal subunit. Contacts proteins S5 and S12.

Functionally, one of the primary rRNA binding proteins, it binds directly to 16S rRNA central domain where it helps coordinate assembly of the platform of the 30S subunit. The polypeptide is Small ribosomal subunit protein uS8 (Methylocella silvestris (strain DSM 15510 / CIP 108128 / LMG 27833 / NCIMB 13906 / BL2)).